The chain runs to 450 residues: Glutamate--tRNA ligase 1 (450 aa).

The short motif at 7–17 is the 'HIGH' region element; it reads PSPTGYMHVGN. Residues 236-240 carry the 'KMSKS' region motif; the sequence is KISKR. Lys-239 contributes to the ATP binding site.

This sequence belongs to the class-I aminoacyl-tRNA synthetase family. Glutamate--tRNA ligase type 1 subfamily. Monomer.

The protein localises to the cytoplasm. The catalysed reaction is tRNA(Glu) + L-glutamate + ATP = L-glutamyl-tRNA(Glu) + AMP + diphosphate. In terms of biological role, catalyzes the attachment of glutamate to tRNA(Glu) in a two-step reaction: glutamate is first activated by ATP to form Glu-AMP and then transferred to the acceptor end of tRNA(Glu). The sequence is that of Glutamate--tRNA ligase 1 from Anaplasma phagocytophilum (strain HZ).